A 304-amino-acid polypeptide reads, in one-letter code: Sulfate adenylyltransferase subunit 2 (304 aa).

It belongs to the PAPS reductase family. CysD subfamily. Heterodimer composed of CysD, the smaller subunit, and CysN.

It catalyses the reaction sulfate + ATP + H(+) = adenosine 5'-phosphosulfate + diphosphate. Its pathway is sulfur metabolism; hydrogen sulfide biosynthesis; sulfite from sulfate: step 1/3. Its function is as follows. With CysN forms the ATP sulfurylase (ATPS) that catalyzes the adenylation of sulfate producing adenosine 5'-phosphosulfate (APS) and diphosphate, the first enzymatic step in sulfur assimilation pathway. APS synthesis involves the formation of a high-energy phosphoric-sulfuric acid anhydride bond driven by GTP hydrolysis by CysN coupled to ATP hydrolysis by CysD. The protein is Sulfate adenylyltransferase subunit 2 of Acinetobacter baylyi (strain ATCC 33305 / BD413 / ADP1).